Consider the following 312-residue polypeptide: MATSKILLYYAFTPLSDPKAVQLWQRELCESLNLRGRILISTHGINGTVGGDIDDCKAYIKKTREYPGFNRMQFKWSEGGADDFPKLSVKVRDEIVAFGAPDELKVDENGVVGGGVHLKPQQVNELVEARGDEVVFFDGRNAMEAQIGKFKDAVVPDVETTHDFIAEIESGKYDDLKDKPVVTYCTGGIRCEILSSLMINRGFKEVYQIDGGIVRYGEQFGNKGLWEGSLYVFDKRMHMEFGEDYKEVGHCIHCDTPTNKFEHCLNEDDCRELVLMCPDCFANVETRHCKRERCAAIAADFAEQGIDPLVTS.

In terms of domain architecture, Rhodanese spans Arg130–Leu225. Cys185 functions as the Cysteine persulfide intermediate in the catalytic mechanism.

The protein belongs to the TrhO family.

It catalyses the reaction uridine(34) in tRNA + AH2 + O2 = 5-hydroxyuridine(34) in tRNA + A + H2O. Catalyzes oxygen-dependent 5-hydroxyuridine (ho5U) modification at position 34 in tRNAs. In Corynebacterium glutamicum (strain R), this protein is tRNA uridine(34) hydroxylase.